A 743-amino-acid polypeptide reads, in one-letter code: Coiled-coil domain-containing protein 30 (743 aa).

2 stretches are compositionally biased toward basic and acidic residues: residues 1-22 and 133-193; these read MSQE…REKQ and SPKE…MKPE. 4 disordered regions span residues 1–25, 114–193, 208–233, and 695–715; these read MSQE…QLAS, ENIC…MKPE, SLLQ…GDKL, and SKEA…LVCS. 2 coiled-coil regions span residues 21–98 and 165–580; these read KQLA…QLNH and REGQ…LIHS. A compositionally biased stretch (low complexity) spans 208–223; that stretch reads SLLQSQSSGDSSDDSG.

The protein belongs to the prefoldin subunit beta family.

The sequence is that of Coiled-coil domain-containing protein 30 (CCDC30) from Macaca fascicularis (Crab-eating macaque).